The following is a 173-amino-acid chain: Inorganic pyrophosphatase (173 aa).

Residues Lys-26, Arg-40, and Tyr-52 each contribute to the substrate site. Positions 62, 67, and 99 each coordinate Mg(2+). Position 138 (Tyr-138) interacts with substrate.

It belongs to the PPase family. As to quaternary structure, homohexamer. Mg(2+) is required as a cofactor.

It is found in the cytoplasm. It carries out the reaction diphosphate + H2O = 2 phosphate + H(+). Catalyzes the hydrolysis of inorganic pyrophosphate (PPi) forming two phosphate ions. This chain is Inorganic pyrophosphatase, found in Sulfolobus acidocaldarius (strain ATCC 33909 / DSM 639 / JCM 8929 / NBRC 15157 / NCIMB 11770).